A 312-amino-acid chain; its full sequence is HTH-type transcriptional regulator PtxR (312 aa).

An HTH lysR-type domain is found at 11–68 (LNLNHLYAFVAVAEHNSFTAAAEALGLSKSLLSEQLRRLEADLGIQLLTRTTRRMTLT). The H-T-H motif DNA-binding region spans 28 to 47 (FTAAAEALGLSKSLLSEQLR).

It belongs to the LysR transcriptional regulatory family. In terms of assembly, monomer in solution. May dimerize on binding to DNA. Interacts with PtxS in the absence of 2-ketogluconate. Binding of the 2-ketogluconate effector to PtxS causes PtxS/PtxR complex dissociation.

Negatively regulated by PtxS, which interacts with PtxR and prevents its activity. Functionally, plays an important role in the regulation of the production of the virulence factor exotoxin A (toxA), via positive regulation of the transcription of the toxA gene. Acts by binding directly to the toxA promoter region. Besides toxA, PtxR modulates the expression of genes that code for the QS-controlled virulence factors. It negatively regulates the expression of the rhamnolipid and pyocyanine genes, through the autoinducer synthase RhlI, and the PQS synthesis operon pqsABCDE, while it positively regulates the expression of lasB through the autoinducer synthase LasI. Also positively regulates the expression of the exotoxin A regulatory protein (toxR or regA). Its function is as follows. In addition, is involved in the positive regulation of glucose metabolism via the regulation of the expression of the kgu and gad operons. Acts by binding directly to the promoter region of the kgu and gad operons. The protein is HTH-type transcriptional regulator PtxR of Pseudomonas aeruginosa (strain ATCC 15692 / DSM 22644 / CIP 104116 / JCM 14847 / LMG 12228 / 1C / PRS 101 / PAO1).